Reading from the N-terminus, the 149-residue chain is HTH-type transcriptional regulator NsrR (149 aa).

Residues 2 to 133 form the HTH rrf2-type domain; sequence QLTSYTDYSL…EQYTVKDLVL (132 aa). A DNA-binding region (H-T-H motif) is located at residues 28-51; sequence VKQVADIYRISYNHLTKVTHELGK. Cys-92, Cys-100, and Cys-106 together coordinate [2Fe-2S] cluster.

The cofactor is [2Fe-2S] cluster.

Functionally, nitric oxide-responsive transcriptional regulator. In Shouchella clausii (strain KSM-K16) (Alkalihalobacillus clausii), this protein is HTH-type transcriptional regulator NsrR (nsrR).